Reading from the N-terminus, the 146-residue chain is Hemoglobin subunit beta (146 aa).

V1 bears the N-acetylvaline mark. Positions 2–146 constitute a Globin domain; that stretch reads ELTAEEKAAV…VANALAHKYH (145 aa). S44 is subject to Phosphoserine. K59 bears the N6-acetyllysine mark. H63 contributes to the heme b binding site. K82 is subject to N6-acetyllysine. H92 contacts heme b. C93 carries the S-nitrosocysteine modification. N6-acetyllysine is present on K144.

It belongs to the globin family. In terms of assembly, heterotetramer of two alpha chains and two beta chains. In terms of tissue distribution, red blood cells.

Functionally, involved in oxygen transport from the lung to the various peripheral tissues. This is Hemoglobin subunit beta (HBB) from Ceratotherium simum (White rhinoceros).